The following is a 91-amino-acid chain: Small ribosomal subunit protein uS19 (91 aa).

The protein belongs to the universal ribosomal protein uS19 family.

Functionally, protein S19 forms a complex with S13 that binds strongly to the 16S ribosomal RNA. This is Small ribosomal subunit protein uS19 from Exiguobacterium sp. (strain ATCC BAA-1283 / AT1b).